The following is an 833-amino-acid chain: Zinc transporter ZIP10 (833 aa).

Residues 1–25 form the signal peptide; it reads MKVHIHTKFCLICLLTFIFHHCNHC. Over residues 30-48 the composition is skewed to basic and acidic residues; the sequence is DHGPEELHRHHRGMTESES. Disordered stretches follow at residues 30-54 and 137-167; these read DHGP…FSVQ and AENH…IKAD. Polar residues predominate over residues 137 to 147; that stretch reads AENHTTTSVTS. Residues 152–167 are compositionally biased toward basic and acidic residues; sequence KCDPEKEAAELPIKAD. N-linked (GlcNAc...) asparagine glycans are attached at residues Asn-191 and Asn-198. The span at 200-209 shows a compositional bias: basic and acidic residues; it reads SVAHSEHGEP. 2 disordered regions span residues 200 to 257 and 271 to 335; these read SVAH…NHDH and RVHS…EDDR. N-linked (GlcNAc...) asparagine glycosylation is present at Asn-218. Residues 229–241 are compositionally biased toward basic residues; it reads VKVRRKEKGKRKK. 2 stretches are compositionally biased toward basic and acidic residues: residues 281 to 315 and 326 to 335; these read HLPE…EAPH and SHKDQSEDDR. Residue Asn-341 is glycosylated (N-linked (GlcNAc...) asparagine). Helical transmembrane passes span 413-433 and 440-460; these read IISI…VPII and FLLT…ALLH. The tract at residues 466–485 is disordered; that stretch reads QGGHDHSHQHTHGHGHSHGH. The helical transmembrane segment at 497–517 threads the bilayer; it reads VLKGLVALGGIYLLFIIEHCI. Phosphothreonine occurs at positions 538 and 555. The residue at position 593 (Ser-593) is a Phosphoserine. 4 consecutive transmembrane segments (helical) span residues 689–709, 734–754, 761–781, and 803–823; these read AIGA…IAVF, IVYN…GTAV, ITLW…LVDM, and FILQ…IALY.

This sequence belongs to the ZIP transporter (TC 2.A.5) family. In terms of assembly, interacts with SLC39A6. This interaction triggers cells to undergo EMT and mitosis. Found in a complex with SLC39A6, SLC39A10 and with the 'Ser-727' phosphorylated form of STAT3 throughout mitosis. Found in a complex with SLC39A6, SLC39A10 and with NCAM1; this complex controls NCAM1 phosphorylation and integration into focal adhesion complexes during epithelial-tomesenchymal transition. Found in a complex with SLC39A6, SLC39A10 and with GSK3B that controls NCAM1 phosphorylation. Post-translationally, undergoes N-terminal ectodomain shedding. In terms of tissue distribution, expressed in the liver, kidney and brain.

It is found in the cell membrane. The protein resides in the apical cell membrane. It catalyses the reaction Zn(2+)(in) = Zn(2+)(out). In terms of biological role, zinc-influx transporter. When associated with SLC39A6, the heterodimer formed by SLC39A10 and SLC39A6 mediates cellular zinc uptake to trigger cells to undergo epithelial-to-mesenchymal transition (EMT). mediates cellular zinc uptake to trigger cells to undergo epithelial-to-mesenchymal transition (EMT). SLC39A10-SLC39A6 heterodimers play also an essentiel role in initiating mitosis by importing zinc into cells to initiate a pathway resulting in the onset of mitosis. Plays an important for both mature B-cell maintenance and humoral immune responses. When associated with SLC39A10, the heterodimer controls NCAM1 phosphorylation and integration into focal adhesion complexes during EMT. This is Zinc transporter ZIP10 from Mus musculus (Mouse).